The sequence spans 510 residues: Ribonuclease Y (510 aa).

The helical transmembrane segment at 2 to 22 (IYIIFSSIFAGFILGFLVRVF) threads the bilayer. The 61-residue stretch at 198-258 (TVASVELPND…IRKELAKRTL (61 aa)) folds into the KH domain. In terms of domain architecture, HD spans 324–419 (VLSHSKETAI…VQIADAISAS (96 aa)).

Belongs to the RNase Y family.

Its subcellular location is the cell membrane. Its function is as follows. Endoribonuclease that initiates mRNA decay. The chain is Ribonuclease Y from Borreliella burgdorferi (strain ATCC 35210 / DSM 4680 / CIP 102532 / B31) (Borrelia burgdorferi).